Here is a 161-residue protein sequence, read N- to C-terminus: Protein-export protein SecB (161 aa).

Positions 141–161 are disordered; that stretch reads KKQQETAGEQPDQPADTITRH.

This sequence belongs to the SecB family. Homotetramer, a dimer of dimers. One homotetramer interacts with 1 SecA dimer.

Its subcellular location is the cytoplasm. One of the proteins required for the normal export of preproteins out of the cell cytoplasm. It is a molecular chaperone that binds to a subset of precursor proteins, maintaining them in a translocation-competent state. It also specifically binds to its receptor SecA. In Nitrosomonas europaea (strain ATCC 19718 / CIP 103999 / KCTC 2705 / NBRC 14298), this protein is Protein-export protein SecB.